An 848-amino-acid chain; its full sequence is DNA mismatch repair protein MutS (848 aa).

G610–S617 is an ATP binding site.

It belongs to the DNA mismatch repair MutS family.

Its function is as follows. This protein is involved in the repair of mismatches in DNA. It is possible that it carries out the mismatch recognition step. This protein has a weak ATPase activity. This chain is DNA mismatch repair protein MutS, found in Francisella philomiragia subsp. philomiragia (strain ATCC 25017 / CCUG 19701 / FSC 153 / O#319-036).